The following is a 132-amino-acid chain: Small ribosomal subunit protein uS8 (132 aa).

The protein belongs to the universal ribosomal protein uS8 family. As to quaternary structure, part of the 30S ribosomal subunit. Contacts proteins S5 and S12.

Functionally, one of the primary rRNA binding proteins, it binds directly to 16S rRNA central domain where it helps coordinate assembly of the platform of the 30S subunit. The polypeptide is Small ribosomal subunit protein uS8 (Exiguobacterium sp. (strain ATCC BAA-1283 / AT1b)).